We begin with the raw amino-acid sequence, 261 residues long: Methionine aminopeptidase (261 aa).

Substrate is bound at residue histidine 78. A divalent metal cation is bound by residues aspartate 96, aspartate 107, and histidine 170. Histidine 177 lines the substrate pocket. 2 residues coordinate a divalent metal cation: glutamate 202 and glutamate 233.

The protein belongs to the peptidase M24A family. Methionine aminopeptidase type 1 subfamily. Monomer. Co(2+) serves as cofactor. It depends on Zn(2+) as a cofactor. Requires Mn(2+) as cofactor. The cofactor is Fe(2+).

It carries out the reaction Release of N-terminal amino acids, preferentially methionine, from peptides and arylamides.. Its function is as follows. Removes the N-terminal methionine from nascent proteins. The N-terminal methionine is often cleaved when the second residue in the primary sequence is small and uncharged (Met-Ala-, Cys, Gly, Pro, Ser, Thr, or Val). Requires deformylation of the N(alpha)-formylated initiator methionine before it can be hydrolyzed. The chain is Methionine aminopeptidase from Buchnera aphidicola subsp. Schizaphis graminum (strain Sg).